The primary structure comprises 128 residues: Large-conductance mechanosensitive channel (128 aa).

2 consecutive transmembrane segments (helical) span residues 10–30 (FAMRGNVVDMAIGVIIGSAFG) and 76–96 (GLFIQNVIDFIIIAFAIFMMI).

This sequence belongs to the MscL family. Homopentamer.

Its subcellular location is the cell inner membrane. In terms of biological role, channel that opens in response to stretch forces in the membrane lipid bilayer. May participate in the regulation of osmotic pressure changes within the cell. In Haemophilus influenzae (strain 86-028NP), this protein is Large-conductance mechanosensitive channel.